Reading from the N-terminus, the 344-residue chain is Acyl-CoA ligase clz12 (344 aa).

2 AMP-binding regions span residues V2–V239 and E248–K322.

It belongs to the ATP-dependent AMP-binding enzyme family.

Its pathway is secondary metabolite biosynthesis. Functionally, acyl-CoA ligase; part of the gene cluster that mediates the biosynthesis of squalestatin S1 (SQS1, also known as zaragozic acid A), a heavily oxidized fungal polyketide that offers potent cholesterol lowering activity by targeting squalene synthase (SS). SQS1 is composed of a 2,8-dioxobicyclic[3.2.1]octane-3,4,5-tricarboxyclic acid core that is connected to two lipophilic polyketide arms. These initial steps feature the priming of an unusual benzoic acid starter unit onto the highly reducing polyketide synthase clz14, followed by oxaloacetate extension and product release to generate a tricarboxylic acid containing product. The phenylalanine ammonia lyase (PAL) clz10 and the acyl-CoA ligase clz12 are involved in transforming phenylalanine into benzoyl-CoA. The citrate synthase-like protein clz17 is involved in connecting the C-alpha-carbons of the hexaketide chain and oxaloacetate to afford the tricarboxylic acid unit. The potential hydrolytic enzymes, clz11 and clz13, are in close proximity to pks2 and may participate in product release. On the other side, the tetraketide arm is synthesized by a the squalestatin tetraketide synthase clz2 and enzymatically esterified to the core in the last biosynthetic step, by the acetyltransferase clz6. The biosynthesis of the tetraketide must involve 3 rounds of chain extension. After the first and second rounds methyl-transfer occurs, and in all rounds of extension the ketoreductase and dehydratase are active. The enoyl reductase and C-MeT of clz2 are not active in the final round of extension. The acetyltransferase clz6 appears to have a broad substrate selectivity for its acyl CoA substrate, allowing the in vitro synthesis of novel squalestatins. The biosynthesis of SQS1 requires several oxidative steps likely performed by oxidoreductases clz3, clz15 and clz16. Finally, in support of the identification of the cluster as being responsible for SQS1 production, the cluster contains a gene encoding a putative squalene synthase (SS) clz20, suggesting a likely mechanism for self-resistance. This Cochliobolus lunatus (Filamentous fungus) protein is Acyl-CoA ligase clz12.